The following is a 170-amino-acid chain: Cathelicidin antimicrobial peptide (170 aa).

Positions 1 to 30 (MNTQWDSPSLGRWSLVLLLLGLVMPLAIVA) are cleaved as a signal peptide. A propeptide spans 31-131 (QVLSYQEAVL…DISCDKDKRK (101 aa)) (cathelin-like domain (CLD)). Cystine bridges form between C86/C97 and C108/C125. The tract at residues 150–162 (LKNIGQRIKDFFG) is active core.

This sequence belongs to the cathelicidin family. In terms of assembly, monomer, homodimer or homotrimer (in vitro). Oligomerizes as tetra- or hexamer in solution (in vitro). In terms of processing, proteolytically cleaved by proteinase PRTN3 into antibacterial peptide LL-37. Proteolytically cleaved by cathepsin CTSG and neutrophil elastase ELANE. Resistant to proteolytic degradation in solution, and when bound to both zwitterionic (mimicking mammalian membranes) and negatively charged membranes (mimicking bacterial membranes). Post-translationally, after secretion onto the skin surface, the CAMP gene product is processed by a serine protease-dependent mechanism into multiple novel antimicrobial peptides distinct from and shorter than cathelicidin LL-37. These peptides show enhanced antimicrobial action, acquiring the ability to kill skin pathogens such as S.aureus, E.coli and C.albicans. These peptides have lost the ability to stimulate CXCL8/IL8 release from keratinocytes. The peptides act synergistically, killing bacteria at lower concentrations when present together, and maintain activity at increased salt condition.

The protein resides in the secreted. Its subcellular location is the vesicle. Functionally, antimicrobial protein that is an integral component of the innate immune system. Binds to bacterial lipopolysaccharides (LPS). Acts via neutrophil N-formyl peptide receptors to enhance the release of CXCL2. Postsecretory processing generates multiple cathelicidin antimicrobial peptides with various lengths which act as a topical antimicrobial defense in sweat on skin. The unprocessed precursor form, cathelicidin antimicrobial peptide, inhibits the growth of Gram-negative E.coli and E.aerogenes with efficiencies comparable to that of the mature peptide LL-37 (in vitro). Antimicrobial peptide that is an integral component of the innate immune system. Binds to bacterial lipopolysaccharides (LPS). Causes membrane permeabilization by forming transmembrane pores (in vitro). Causes lysis of E.coli. Exhibits antimicrobial activity against Gram-negative bacteria such as P.aeruginosa, S.typhimurium, E.aerogenes, E.coli and P.syringae, Gram-positive bacteria such as L.monocytogenes, S.epidermidis, S.pyogenes and S.aureus, as well as vancomycin-resistant enterococci (in vitro). Exhibits antimicrobial activity against methicillin-resistant S.aureus, P.mirabilis, and C.albicans in low-salt media, but not in media containing 100 mM NaCl (in vitro). Forms chiral supramolecular assemblies with quinolone signal (PQS) molecules of P.aeruginosa, which may lead to interference of bacterial quorum signaling and perturbance of bacterial biofilm formation. May form supramolecular fiber-like assemblies on bacterial membranes. Induces cytokine and chemokine producation as well as TNF/TNFA and CSF2/GMCSF production in normal human keratinocytes. Exhibits hemolytic activity against red blood cells. In terms of biological role, exhibits antimicrobial activity against E.coli and B.megaterium (in vitro). The protein is Cathelicidin antimicrobial peptide of Ateles fusciceps (Brown-headed spider monkey).